We begin with the raw amino-acid sequence, 215 residues long: AN1-type zinc finger protein C1271.05c (215 aa).

Over residues 116–128 (IPSISKSNLTNPP) the composition is skewed to polar residues. The segment at 116–138 (IPSISKSNLTNPPLESEKSSDKA) is disordered. Residues 144–193 (ATSRRRCCHPTCTRITLRLAGNCLHCNGRFCAAHRLMEDHDCVALFSLRK) form an AN1-type zinc finger. Zn(2+) contacts are provided by Cys150, Cys155, Cys166, Cys169, Cys174, His177, His183, and Cys185.

The protein resides in the cytoplasm. The protein localises to the nucleus. This Schizosaccharomyces pombe (strain 972 / ATCC 24843) (Fission yeast) protein is AN1-type zinc finger protein C1271.05c.